A 138-amino-acid chain; its full sequence is Transcription antitermination protein NusB (138 aa).

It belongs to the NusB family.

Functionally, involved in transcription antitermination. Required for transcription of ribosomal RNA (rRNA) genes. Binds specifically to the boxA antiterminator sequence of the ribosomal RNA (rrn) operons. The protein is Transcription antitermination protein NusB of Blochmanniella floridana.